The primary structure comprises 378 residues: Erythronate-4-phosphate dehydrogenase (378 aa).

Substrate-binding residues include Ser45 and Thr66. NAD(+) is bound by residues Asp146 and Thr175. Arg208 is a catalytic residue. Position 232 (Asp232) interacts with NAD(+). Glu237 is a catalytic residue. His254 (proton donor) is an active-site residue. Gly257 provides a ligand contact to NAD(+). A substrate-binding site is contributed by Tyr258.

This sequence belongs to the D-isomer specific 2-hydroxyacid dehydrogenase family. PdxB subfamily. In terms of assembly, homodimer.

It is found in the cytoplasm. The catalysed reaction is 4-phospho-D-erythronate + NAD(+) = (R)-3-hydroxy-2-oxo-4-phosphooxybutanoate + NADH + H(+). It participates in cofactor biosynthesis; pyridoxine 5'-phosphate biosynthesis; pyridoxine 5'-phosphate from D-erythrose 4-phosphate: step 2/5. Catalyzes the oxidation of erythronate-4-phosphate to 3-hydroxy-2-oxo-4-phosphonooxybutanoate. The chain is Erythronate-4-phosphate dehydrogenase from Klebsiella pneumoniae (strain 342).